A 321-amino-acid polypeptide reads, in one-letter code: Glycerol-3-phosphate phosphatase (321 aa).

The Nucleophile role is filled by D34. Residues D34, D36, and D260 each contribute to the Mg(2+) site. The active-site Proton donor is the D36.

Belongs to the HAD-like hydrolase superfamily. CbbY/CbbZ/Gph/YieH family. As to quaternary structure, homodimer. Mg(2+) serves as cofactor. As to expression, ubiquitously expressed with higher expression in testis, heart, skeletal muscle and islet tissue (at protein level).

It catalyses the reaction O-phospho-L-tyrosyl-[protein] + H2O = L-tyrosyl-[protein] + phosphate. The enzyme catalyses sn-glycerol 1-phosphate + H2O = glycerol + phosphate. The catalysed reaction is sn-glycerol 3-phosphate + H2O = glycerol + phosphate. Inhibited by orthovanadate, beryllium trifluoride, Ca(2+) and EDTA. Functionally, glycerol-3-phosphate phosphatase hydrolyzing glycerol-3-phosphate into glycerol. Thereby, regulates the cellular levels of glycerol-3-phosphate a metabolic intermediate of glucose, lipid and energy metabolism. Was also shown to have a 2-phosphoglycolate phosphatase activity and a tyrosine-protein phosphatase activity. However, their physiological relevance is unclear. In vitro, also has a phosphatase activity toward ADP, ATP, GDP and GTP. This Mus musculus (Mouse) protein is Glycerol-3-phosphate phosphatase.